The following is a 435-amino-acid chain: rRNA methyltransferase 3A, mitochondrial (435 aa).

The N-terminal 42 residues, 1 to 42, are a transit peptide targeting the mitochondrion; sequence MAALMYNVSRGLVMLGERSLFQRERYQILVNSRRFLRGLRRR. Polar residues predominate over residues 314–324; the sequence is KQLVSGQTENV. Residues 314-351 form a disordered region; the sequence is KQLVSGQTENVSSDDYSESDSDDDDDEEEDEDSLPHVK. Over residues 328–345 the composition is skewed to acidic residues; sequence DYSESDSDDDDDEEEDED. Residues G369 and L402 each contribute to the S-adenosyl-L-methionine site.

The protein belongs to the class IV-like SAM-binding methyltransferase superfamily. RNA methyltransferase TrmH family.

It is found in the mitochondrion. It catalyses the reaction a uridine in rRNA + S-adenosyl-L-methionine = a 2'-O-methyluridine in rRNA + S-adenosyl-L-homocysteine + H(+). Its function is as follows. S-adenosyl-L-methionine-dependent 2'-O-ribose methyltransferase that catalyzes the formation of 2'-O-methylguanosine at position 1485 (Gm1485) in the mitochondrial large subunit ribosomal RNA (mtLSU rRNA), a conserved modification in the peptidyl transferase domain of the mtLSU rRNA. Also required for formation of 2'-O-methyluridine at position 1484 (Um1484) mediated by MRM2. The protein is rRNA methyltransferase 3A, mitochondrial (mrm3a) of Danio rerio (Zebrafish).